A 138-amino-acid chain; its full sequence is MLQPSRRKYRKEQKGRNTGLATRGTHVSFGEFGLKATGRGRLTARQIEAARRAINRHIKRGGRIWIRIFPDKPISQKPAEVRMGNGKGNPEYWVAEIQPGKVLYEMEGVSEELAREAFRLAAAKLPISTTFVARHIGA.

A compositionally biased stretch (basic residues) spans 1-13; the sequence is MLQPSRRKYRKEQ. Residues 1–22 are disordered; the sequence is MLQPSRRKYRKEQKGRNTGLAT.

Belongs to the universal ribosomal protein uL16 family. In terms of assembly, part of the 50S ribosomal subunit.

In terms of biological role, binds 23S rRNA and is also seen to make contacts with the A and possibly P site tRNAs. This Bordetella petrii (strain ATCC BAA-461 / DSM 12804 / CCUG 43448) protein is Large ribosomal subunit protein uL16.